The following is a 363-amino-acid chain: Carbamoyl phosphate synthase small chain (363 aa).

The interval 1 to 172 (MKAFLVLDNG…TKYIFGTHTG (172 aa)) is CPSase. Ser45, Gly224, and Gly226 together coordinate L-glutamine. Residues 176–362 (KLAVYDYGVK…YDLVETTKRG (187 aa)) form the Glutamine amidotransferase type-1 domain. Catalysis depends on Cys252, which acts as the Nucleophile. Residues Leu253, Gln256, Asn294, Gly296, and Phe297 each contribute to the L-glutamine site. Active-site residues include His335 and Glu337.

It belongs to the CarA family. As to quaternary structure, composed of two chains; the small (or glutamine) chain promotes the hydrolysis of glutamine to ammonia, which is used by the large (or ammonia) chain to synthesize carbamoyl phosphate. Tetramer of heterodimers (alpha,beta)4.

It carries out the reaction hydrogencarbonate + L-glutamine + 2 ATP + H2O = carbamoyl phosphate + L-glutamate + 2 ADP + phosphate + 2 H(+). The catalysed reaction is L-glutamine + H2O = L-glutamate + NH4(+). Its pathway is amino-acid biosynthesis; L-arginine biosynthesis; carbamoyl phosphate from bicarbonate: step 1/1. It functions in the pathway pyrimidine metabolism; UMP biosynthesis via de novo pathway; (S)-dihydroorotate from bicarbonate: step 1/3. Functionally, small subunit of the glutamine-dependent carbamoyl phosphate synthetase (CPSase). CPSase catalyzes the formation of carbamoyl phosphate from the ammonia moiety of glutamine, carbonate, and phosphate donated by ATP, constituting the first step of 2 biosynthetic pathways, one leading to arginine and/or urea and the other to pyrimidine nucleotides. The small subunit (glutamine amidotransferase) binds and cleaves glutamine to supply the large subunit with the substrate ammonia. In Leptospira borgpetersenii serovar Hardjo-bovis (strain L550), this protein is Carbamoyl phosphate synthase small chain.